A 367-amino-acid chain; its full sequence is Lipoyl synthase 2, chloroplastic (367 aa).

Residues Cys84, Cys89, Cys95, Cys121, Cys125, Cys128, and Ser336 each coordinate [4Fe-4S] cluster. The 222-residue stretch at 104-325 (GEGDGIATAT…KEYGESVGFR (222 aa)) folds into the Radical SAM core domain.

It belongs to the radical SAM superfamily. Lipoyl synthase family. [4Fe-4S] cluster is required as a cofactor.

Its subcellular location is the plastid. It is found in the chloroplast. The enzyme catalyses [[Fe-S] cluster scaffold protein carrying a second [4Fe-4S](2+) cluster] + N(6)-octanoyl-L-lysyl-[protein] + 2 oxidized [2Fe-2S]-[ferredoxin] + 2 S-adenosyl-L-methionine + 4 H(+) = [[Fe-S] cluster scaffold protein] + N(6)-[(R)-dihydrolipoyl]-L-lysyl-[protein] + 4 Fe(3+) + 2 hydrogen sulfide + 2 5'-deoxyadenosine + 2 L-methionine + 2 reduced [2Fe-2S]-[ferredoxin]. It functions in the pathway protein modification; protein lipoylation via endogenous pathway; protein N(6)-(lipoyl)lysine from octanoyl-[acyl-carrier-protein]: step 2/2. Its function is as follows. Catalyzes the radical-mediated insertion of two sulfur atoms into the C-6 and C-8 positions of the octanoyl moiety bound to the lipoyl domains of lipoate-dependent enzymes, thereby converting the octanoylated domains into lipoylated derivatives. The protein is Lipoyl synthase 2, chloroplastic of Zea mays (Maize).